The sequence spans 712 residues: MAEPSFARLFLLFFSFLLIFATYSWVFGPDSGFLFGTRVRKTLGSNRQVHVDHSLEKPHHPLDPLTVREINRVRTILSNHDPGFGSGSATIHSMALDEPEKSRVVQWKKGNKLLSRRAAVVAYWGGQTHEITVDLDSGRVVSDVINRTSGYPILTLNDVFAASQVPLKSLEFNRSIEARGVKFSDLACITPFAGWFGSEEEGRRVIRVQCFTLQGTTNYFMRPLEGLYVTVDLDKLEVIKIIDKGPIPIPKASGTEYRFGVQNKPVHMDRINPISMEQPDGPSFRVEDGHLVKWANWVFHVKADQRAGMIISQATVRDSETGEPRSVMYKGFPSELFVPYMDPEEGWYYKGYMDAGELGLGPTAMPLVPLNDCPRNSYYIDGVFASPDGKPIVQPNMICLFERYAGDISWRHSEILFANADIRESRPKVTLVARMATSVGNYDYIFDWEFQTDGLIRVTVAASGMLMVKGTPYDNVDDLGDREDDAGPLISENVIGVVHDHFITFHLDMDIDGPMNNSLVKVHLEKQRVPTGKSPRKSYLKVKKYIAKTEKDAQIKLSLYDPYEFHIVNPNRKSRVGNPAGYRIVPGGNAASLLDHDDPPQIRGAFTNNQIWVTPYNRSEQYAGGVLIYQSQGDDTLQVWSDRDRSIENKDIVLWYTLGFHHVPCQEDYPVMPTVAASFELKPANFFESNPILGSAPFFEKDLPVCRPFASS.

The N-terminal stretch at 1-24 (MAEPSFARLFLLFFSFLLIFATYS) is a signal peptide. Residues Asn146 and Asn173 are each glycosylated (N-linked (GlcNAc...) asparagine). An intrachain disulfide couples Cys188 to Cys210. 352–363 (YMDAGELGLGPT) serves as a coordination point for substrate. Asp354 (proton acceptor) is an active-site residue. Cys373 and Cys399 form a disulfide bridge. 439-444 (VGNYDY) lines the substrate pocket. The active-site Schiff-base intermediate with substrate; via topaquinone is the Tyr442. Residue Tyr442 is modified to 2',4',5'-topaquinone. Cu cation contacts are provided by His499 and His501. Mn(2+) is bound by residues Asp508, Met509, and Asp510. N-linked (GlcNAc...) asparagine glycosylation is found at Asn516 and Asn617. Residues Asp651 and Ile652 each coordinate Mn(2+). His662 provides a ligand contact to Cu cation.

It belongs to the copper/topaquinone oxidase family. As to quaternary structure, homodimer. The cofactor is Cu cation. Requires Zn(2+) as cofactor. L-topaquinone is required as a cofactor. Mn(2+) serves as cofactor. Post-translationally, topaquinone (TPQ) is generated by copper-dependent autoxidation of a specific tyrosyl residue. Mostly expressed in roots, stems and flowers, and, at lower levels, in leaves and cotyledons.

The protein resides in the secreted. The protein localises to the extracellular space. Its subcellular location is the apoplast. It carries out the reaction a primary methyl amine + O2 + H2O = an aldehyde + H2O2 + NH4(+). Its pathway is amine and polyamine degradation; putrescine degradation. Functionally, copper amine oxidase that can use putrescine and spermidine as substrates. Required for abscisic acid- (ABA) and polyamine- (PA) and H(2)O(2)-dependent induced nitric oxide (NO) biosynthesis. Involved in ABA signal transduction and in responses to osmotic stress. The sequence is that of Amine oxidase [copper-containing] gamma 1 from Arabidopsis thaliana (Mouse-ear cress).